The following is a 264-amino-acid chain: MAATGEALTPQGYIQHHLTNLSVGEGFWTWHIDSLFFSVGLGVLFLWLFHSVGKKATTGVPGKLQCFVEMIVEFVDNSVKETFHGRNPVIAPLALTIFVWVFMMNFMDMVPVDWIPELAMAAGIPYMKVVPTTDLNITFSMAIGVFLLIIYYSIKVKGVSGFVKELTMQPFNHWAMIPVNFLLETVTLIAKPISLALRLFGNLYAGELIFILIALMYGANWALSTLGVTLQLGWLIFHILVITLQAFIFMMLTIVYLSMAHEDH.

Transmembrane regions (helical) follow at residues 32–52 (IDSLFFSVGLGVLFLWLFHSV), 89–109 (VIAPLALTIFVWVFMMNFMDM), 134–154 (DLNITFSMAIGVFLLIIYYSI), 177–197 (IPVNFLLETVTLIAKPISLAL), 208–228 (LIFILIALMYGANWALSTLGV), and 235–255 (LIFHILVITLQAFIFMMLTIV).

The protein belongs to the ATPase A chain family. In terms of assembly, F-type ATPases have 2 components, CF(1) - the catalytic core - and CF(0) - the membrane proton channel. CF(1) has five subunits: alpha(3), beta(3), gamma(1), delta(1), epsilon(1). CF(0) has three main subunits: a(1), b(2) and c(9-12). The alpha and beta chains form an alternating ring which encloses part of the gamma chain. CF(1) is attached to CF(0) by a central stalk formed by the gamma and epsilon chains, while a peripheral stalk is formed by the delta and b chains.

The protein resides in the cell inner membrane. Functionally, key component of the proton channel; it plays a direct role in the translocation of protons across the membrane. The chain is ATP synthase subunit a from Shewanella piezotolerans (strain WP3 / JCM 13877).